Reading from the N-terminus, the 494-residue chain is 4-trimethylaminobutyraldehyde dehydrogenase (494 aa).

Residue serine 2 is modified to N-acetylserine. At lysine 30 the chain carries N6-acetyllysine; alternate. Lysine 30 is subject to N6-succinyllysine; alternate. Lysine 59 carries the N6-succinyllysine modification. NAD(+)-binding positions include lysine 180 and 232 to 236; that span reads GSVPT. The active-site Proton acceptor is glutamate 254. Catalysis depends on cysteine 288, which acts as the Nucleophile. N6-acetyllysine is present on lysine 298. An NAD(+)-binding site is contributed by glutamate 391.

The protein belongs to the aldehyde dehydrogenase family. Homotetramer. Detected in lever (at protein level).

The protein resides in the cytoplasm. Its subcellular location is the cytosol. The catalysed reaction is 4-(trimethylamino)butanal + NAD(+) + H2O = 4-(trimethylamino)butanoate + NADH + 2 H(+). It catalyses the reaction an aldehyde + NAD(+) + H2O = a carboxylate + NADH + 2 H(+). The enzyme catalyses 4-aminobutanal + NAD(+) + H2O = 4-aminobutanoate + NADH + 2 H(+). It carries out the reaction formaldehyde + NAD(+) + H2O = formate + NADH + 2 H(+). The catalysed reaction is acetaldehyde + NAD(+) + H2O = acetate + NADH + 2 H(+). It catalyses the reaction imidazole-4-acetaldehyde + NAD(+) + H2O = imidazole-4-acetate + NADH + 2 H(+). The enzyme catalyses acrolein + NAD(+) + H2O = acrylate + NADH + 2 H(+). It carries out the reaction (5-hydroxyindol-3-yl)acetaldehyde + NAD(+) + H2O = (5-hydroxyindol-3-yl)acetate + NADH + 2 H(+). The catalysed reaction is 3,4-dihydroxyphenylacetaldehyde + NAD(+) + H2O = 3,4-dihydroxyphenylacetate + NADH + 2 H(+). It catalyses the reaction spermine monoaldehyde + NAD(+) + H2O = N-(2-carboxyethyl)spermidine + NADH + 2 H(+). The enzyme catalyses propanal + NAD(+) + H2O = propanoate + NADH + 2 H(+). It carries out the reaction butanal + NAD(+) + H2O = butanoate + NADH + 2 H(+). The catalysed reaction is pentanal + NAD(+) + H2O = pentanoate + NADH + 2 H(+). It catalyses the reaction hexanal + NAD(+) + H2O = hexanoate + NADH + 2 H(+). It functions in the pathway amine and polyamine biosynthesis; carnitine biosynthesis. Converts gamma-trimethylaminobutyraldehyde into gamma-butyrobetaine with high efficiency (in vitro). Can catalyze the irreversible oxidation of a broad range of aldehydes to the corresponding acids in an NAD-dependent reaction, but with low efficiency. Catalyzes the oxidation of aldehydes arising from biogenic amines and polyamines. The polypeptide is 4-trimethylaminobutyraldehyde dehydrogenase (Aldh9a1) (Rattus norvegicus (Rat)).